Here is an 875-residue protein sequence, read N- to C-terminus: Alanine--tRNA ligase (875 aa).

Residues histidine 564, histidine 568, cysteine 666, and histidine 670 each contribute to the Zn(2+) site.

Belongs to the class-II aminoacyl-tRNA synthetase family. As to quaternary structure, homotetramer. The cofactor is Zn(2+).

Its subcellular location is the cytoplasm. It carries out the reaction tRNA(Ala) + L-alanine + ATP = L-alanyl-tRNA(Ala) + AMP + diphosphate. Catalyzes the attachment of alanine to tRNA(Ala) in a two-step reaction: alanine is first activated by ATP to form Ala-AMP and then transferred to the acceptor end of tRNA(Ala). Also edits incorrectly charged Ser-tRNA(Ala) and Gly-tRNA(Ala) via its editing domain. The protein is Alanine--tRNA ligase of Yersinia enterocolitica serotype O:8 / biotype 1B (strain NCTC 13174 / 8081).